Here is a 511-residue protein sequence, read N- to C-terminus: Xylose import ATP-binding protein XylG (511 aa).

ABC transporter domains are found at residues 6 to 244 and 261 to 506; these read LEMR…VGRE and FEAR…IGKP.

The protein belongs to the ABC transporter superfamily. Xylose importer (TC 3.A.1.2.4) family. In terms of assembly, the complex is composed of two ATP-binding proteins (XylG), two transmembrane proteins (XylH) and a solute-binding protein (XylF).

The protein resides in the cell inner membrane. The catalysed reaction is D-xylose(out) + ATP + H2O = D-xylose(in) + ADP + phosphate + H(+). Part of the ABC transporter complex XylFGH involved in xylose import. Responsible for energy coupling to the transport system. In Brucella melitensis biotype 1 (strain ATCC 23456 / CCUG 17765 / NCTC 10094 / 16M), this protein is Xylose import ATP-binding protein XylG.